The primary structure comprises 76 residues: MARFFRRRKFCRFTAEGVKEIDYKDLNTLKAYISETGKIVPSRITGTKARYQRQLATAIKRARYLALLPYTDSHGR.

The protein belongs to the bacterial ribosomal protein bS18 family. As to quaternary structure, part of the 30S ribosomal subunit. Forms a tight heterodimer with protein bS6.

Binds as a heterodimer with protein bS6 to the central domain of the 16S rRNA, where it helps stabilize the platform of the 30S subunit. The protein is Small ribosomal subunit protein bS18 of Stutzerimonas stutzeri (strain A1501) (Pseudomonas stutzeri).